A 324-amino-acid polypeptide reads, in one-letter code: Glyoxylate/hydroxypyruvate reductase B (324 aa).

Residues Arg-237 and Glu-266 contribute to the active site. His-285 functions as the Proton donor in the catalytic mechanism.

It belongs to the D-isomer specific 2-hydroxyacid dehydrogenase family. GhrB subfamily. Homodimer.

It localises to the cytoplasm. It carries out the reaction glycolate + NADP(+) = glyoxylate + NADPH + H(+). The enzyme catalyses (R)-glycerate + NAD(+) = 3-hydroxypyruvate + NADH + H(+). It catalyses the reaction (R)-glycerate + NADP(+) = 3-hydroxypyruvate + NADPH + H(+). In terms of biological role, catalyzes the NADPH-dependent reduction of glyoxylate and hydroxypyruvate into glycolate and glycerate, respectively. This is Glyoxylate/hydroxypyruvate reductase B from Shigella flexneri.